A 302-amino-acid chain; its full sequence is Actin maturation protease (302 aa).

Residues 1-26 (MPHTNEDPTAQQAGVILDPPPPLPPP) form a disordered region. A peptidase C39-like region spans residues 85–205 (SLIQEGPQCG…WAVISGVLFG (121 aa)). Residue Cys93 is part of the active site.

The protein belongs to the ACTMAP family.

It localises to the cytoplasm. The catalysed reaction is N-terminal N(alpha)-acetyl-L-methionyl-L-aspartyl-[protein] + H2O = N-terminal L-aspartyl-[protein] + N-acetyl-L-methionine. The enzyme catalyses N-terminal N(alpha)-acetyl-L-methionyl-L-glutamyl-[protein] + H2O = N-terminal L-glutamyl-[protein] + N-acetyl-L-methionine. It carries out the reaction N-terminal N(alpha)-acetyl-L-cysteinyl-L-aspartyl-[protein] + H2O = N-terminal L-aspartyl-[protein] + N-acetyl-L-cysteine. It catalyses the reaction N-terminal N(alpha)-acetyl-L-cysteinyl-L-glutamyl-[protein] + H2O = N-terminal L-glutamyl-[protein] + N-acetyl-L-cysteine. Functionally, actin maturation protease that specifically mediates the cleavage of immature acetylated N-terminal actin, thereby contributing to actin maturation. Cleaves N-terminal acetylated methionine of immature cytoplasmic beta- and gamma-actin after translation. Cleaves N-terminal acetylated cysteine of muscle alpha-actin after canonical removal of N-terminal methionine. In Xenopus tropicalis (Western clawed frog), this protein is Actin maturation protease.